Reading from the N-terminus, the 228-residue chain is MFDFGLGELVFVGIIALIVLGPERLPEAARTAGRLIGRLQRFVGSVKQEFDTQIELEELRKAKQEFEAAAAQVRDSLKETGTDMEGNLHDISDGLKPWEKLPEQRTPADFGVDENGNPLPDAANTLSDGISDVMPSERSYASAETLGDSGQTGSTAEPAETDQDRAWREYLTASAAAPVVQTVEVSYIDTAVETPVPHTTSLRKQAISRKRDFRPKHRAKPKLRVRKS.

Residues M1–G21 form a helical membrane-spanning segment. Disordered stretches follow at residues D109–D162 and P197–S228. The span at A206 to S228 shows a compositional bias: basic residues.

The protein belongs to the TatB family. As to quaternary structure, the Tat system comprises two distinct complexes: a TatABC complex, containing multiple copies of TatA, TatB and TatC subunits, and a separate TatA complex, containing only TatA subunits. Substrates initially bind to the TatABC complex, which probably triggers association of the separate TatA complex to form the active translocon.

It localises to the cell inner membrane. Its function is as follows. Part of the twin-arginine translocation (Tat) system that transports large folded proteins containing a characteristic twin-arginine motif in their signal peptide across membranes. Together with TatC, TatB is part of a receptor directly interacting with Tat signal peptides. TatB may form an oligomeric binding site that transiently accommodates folded Tat precursor proteins before their translocation. The polypeptide is Sec-independent protein translocase protein TatB (Neisseria meningitidis serogroup B (strain ATCC BAA-335 / MC58)).